A 183-amino-acid polypeptide reads, in one-letter code: Ribosome rescue factor SmrB (183 aa).

One can recognise a Smr domain in the interval 98–173 (LDLHGLTQLQ…GDAALLVLIE (76 aa)).

Belongs to the SmrB family. As to quaternary structure, associates with collided ribosomes, but not with correctly translating polysomes.

Functionally, acts as a ribosome collision sensor. Detects stalled/collided disomes (pairs of ribosomes where the leading ribosome is stalled and a second ribosome has collided with it) and endonucleolytically cleaves mRNA at the 5' boundary of the stalled ribosome. Stalled/collided disomes form a new interface (primarily via the 30S subunits) that binds SmrB. Cleaved mRNA becomes available for tmRNA ligation, leading to ribosomal subunit dissociation and rescue of stalled ribosomes. The sequence is that of Ribosome rescue factor SmrB from Shigella dysenteriae serotype 1 (strain Sd197).